Here is a 120-residue protein sequence, read N- to C-terminus: Large ribosomal subunit protein uL18 (120 aa).

Belongs to the universal ribosomal protein uL18 family. Part of the 50S ribosomal subunit; part of the 5S rRNA/L5/L18/L25 subcomplex. Contacts the 5S and 23S rRNAs.

Functionally, this is one of the proteins that bind and probably mediate the attachment of the 5S RNA into the large ribosomal subunit, where it forms part of the central protuberance. In Rhizobium meliloti (strain 1021) (Ensifer meliloti), this protein is Large ribosomal subunit protein uL18.